The following is a 391-amino-acid chain: Chaperone protein DnaJ (391 aa).

The region spanning 4–68 is the J domain; the sequence is DFYDVLGVSR…ETRQQYDQLG (65 aa). A compositionally biased stretch (basic and acidic residues) spans 53–79; it reads DVLTDEETRQQYDQLGHERFEEAEKRG. Disordered regions lie at residues 53–94 and 117–136; these read DVLT…MGGA and FFGG…EQGR. Composition is skewed to gly residues over residues 81-94 and 119-129; these read TGNG…MGGA and GGAGGGGGRGR. The CR-type zinc finger occupies 152 to 234; sequence GVSKQVTVRR…CGGQGQTRER (83 aa). Positions 165, 168, 182, 185, 208, 211, 222, and 225 each coordinate Zn(2+). CXXCXGXG motif repeat units lie at residues 165–172, 182–189, 208–215, and 222–229; these read CADCGGSG, CPQCDGQG, CSRCGGEG, and CSTCGGQG.

It belongs to the DnaJ family. In terms of assembly, homodimer. Requires Zn(2+) as cofactor.

It is found in the cytoplasm. Functionally, participates actively in the response to hyperosmotic and heat shock by preventing the aggregation of stress-denatured proteins and by disaggregating proteins, also in an autonomous, DnaK-independent fashion. Unfolded proteins bind initially to DnaJ; upon interaction with the DnaJ-bound protein, DnaK hydrolyzes its bound ATP, resulting in the formation of a stable complex. GrpE releases ADP from DnaK; ATP binding to DnaK triggers the release of the substrate protein, thus completing the reaction cycle. Several rounds of ATP-dependent interactions between DnaJ, DnaK and GrpE are required for fully efficient folding. Also involved, together with DnaK and GrpE, in the DNA replication of plasmids through activation of initiation proteins. The protein is Chaperone protein DnaJ of Halobacterium salinarum (strain ATCC 29341 / DSM 671 / R1).